The following is a 468-amino-acid chain: Na(+)/H(+) antiporter NhaA (468 aa).

Helical transmembrane passes span 28–48 (FLHVEAVSGAVLLAAAAIALV), 79–99 (LHFWINDALMTLFFLAVGMEI), 115–135 (ALPLAAALGGVVAPALIYLAF), 143–163 (AGWAVPTATDIAFAVGVLALL), 173–193 (IFLLALAIIDDIIAVLIIAFF), 196–216 (GGLDYSGFAVAALGIAIVLGL), 219–239 (IGIGTAYAYVLPGAIVWTGLL), 240–260 (MTGAHPTLAGVVLGLMTPVVP), 317–337 (ALHPWVAYAIMPLFALANAGV), 356–376 (VAGALIVGKPAGVIAMSWLLV), 392–412 (IVLIGLLAGVGFTMSIFIAML), and 426–446 (LGVLLGSLATAMLGLAWGAIY).

This sequence belongs to the NhaA Na(+)/H(+) (TC 2.A.33) antiporter family.

It localises to the cell inner membrane. It carries out the reaction Na(+)(in) + 2 H(+)(out) = Na(+)(out) + 2 H(+)(in). Na(+)/H(+) antiporter that extrudes sodium in exchange for external protons. In Bordetella petrii (strain ATCC BAA-461 / DSM 12804 / CCUG 43448), this protein is Na(+)/H(+) antiporter NhaA.